Consider the following 163-residue polypeptide: Phosphopantetheine adenylyltransferase (163 aa).

S10 serves as a coordination point for substrate. Residues 10–11 (SF) and H18 contribute to the ATP site. The substrate site is built by K42, L74, and R88. ATP contacts are provided by residues 89 to 91 (GLR), E99, and 124 to 130 (YSFLSSS).

Belongs to the bacterial CoaD family. In terms of assembly, homohexamer. Mg(2+) is required as a cofactor.

It is found in the cytoplasm. It carries out the reaction (R)-4'-phosphopantetheine + ATP + H(+) = 3'-dephospho-CoA + diphosphate. The protein operates within cofactor biosynthesis; coenzyme A biosynthesis; CoA from (R)-pantothenate: step 4/5. Functionally, reversibly transfers an adenylyl group from ATP to 4'-phosphopantetheine, yielding dephospho-CoA (dPCoA) and pyrophosphate. In Bacillus mycoides (strain KBAB4) (Bacillus weihenstephanensis), this protein is Phosphopantetheine adenylyltransferase.